A 390-amino-acid polypeptide reads, in one-letter code: Transforming growth factor beta-1 proprotein (390 aa).

An N-terminal signal peptide occupies residues 1-29 (MPPSGLRLLPLLLPLLWLLVLTPGRPAAG). The interval 30-74 (LSTCKTIDMELVKRKRIEAIRGQILSKLRLASPPSQGEVPPGPLP) is straightjacket domain. The arm domain stretch occupies residues 75 to 271 (EAVLALYNST…ATPLERAQHL (197 aa)). Asparagine 82, asparagine 136, and asparagine 176 each carry an N-linked (GlcNAc...) asparagine glycan. Positions 226-252 (DSRDNTLQVDINGFTTGRRGDLATIHG) are bowtie tail. Residues 244–246 (RGD) carry the Cell attachment site motif. Intrachain disulfides connect cysteine 285–cysteine 294, cysteine 293–cysteine 356, cysteine 322–cysteine 387, and cysteine 326–cysteine 389.

The protein belongs to the TGF-beta family. Homodimer; disulfide-linked. Interacts with the serine proteases, HTRA1 and HTRA3: the interaction with either inhibits TGFB1-mediated signaling and the HTRA protease activity is required for this inhibition. May interact with THSD4; this interaction may lead to sequestration by FBN1 microfibril assembly and attenuation of TGFB signaling. Interacts with CD109, DPT and ASPN. Interacts with EFEMP2. Interacts with TSKU; the interaction contributes to regulation of the hair cycle. As to quaternary structure, homodimer; disulfide-linked. Interacts with transforming growth factor beta-1 (TGF-beta-1) chain; interaction is non-covalent and maintains TGF-beta-1 in a latent state; each latency-associated peptide (LAP) monomer interacts with TGF-beta-1 in the other monomer. Interacts with LTBP1; leading to regulation of TGF-beta-1 activation. Interacts with LRRC32/GARP; leading to regulation of TGF-beta-1 activation on the surface of activated regulatory T-cells (Tregs). Interacts with LRRC33/NRROS; leading to regulation of TGF-beta-1 in macrophages and microglia. Interacts (via cell attachment site) with integrins ITGAV and ITGB6 (ITGAV:ITGB6), leading to release of the active TGF-beta-1. Interacts with NREP; the interaction results in a decrease in TGFB1 autoinduction. Interacts with HSP90AB1; inhibits latent TGFB1 activation. Interact with PSG9; leading to TGFB1 activation. Interacts with TGFBR3. In terms of assembly, homodimer; disulfide-linked. Interacts with TGF-beta receptors (TGFBR1 and TGFBR2), leading to signal transduction. In terms of processing, transforming growth factor beta-1 proprotein: The precursor proprotein is cleaved in the Golgi apparatus by FURIN to form Transforming growth factor beta-1 (TGF-beta-1) and Latency-associated peptide (LAP) chains, which remain non-covalently linked, rendering TGF-beta-1 inactive. Post-translationally, N-glycosylated. Deglycosylation leads to activation of Transforming growth factor beta-1 (TGF-beta-1); mechanisms triggering deglycosylation-driven activation of TGF-beta-1 are however unclear. In terms of tissue distribution, highly expressed in bone. Abundantly expressed in articular cartilage and chondrocytes and is increased in osteoarthritis (OA). Colocalizes with ASPN in chondrocytes within OA lesions of articular cartilage.

The protein resides in the secreted. It is found in the extracellular space. It localises to the extracellular matrix. In terms of biological role, transforming growth factor beta-1 proprotein: Precursor of the Latency-associated peptide (LAP) and Transforming growth factor beta-1 (TGF-beta-1) chains, which constitute the regulatory and active subunit of TGF-beta-1, respectively. Its function is as follows. Required to maintain the Transforming growth factor beta-1 (TGF-beta-1) chain in a latent state during storage in extracellular matrix. Associates non-covalently with TGF-beta-1 and regulates its activation via interaction with 'milieu molecules', such as LTBP1, LRRC32/GARP and LRRC33/NRROS, that control activation of TGF-beta-1. Interaction with LRRC33/NRROS regulates activation of TGF-beta-1 in macrophages and microglia. Interaction with LRRC32/GARP controls activation of TGF-beta-1 on the surface of activated regulatory T-cells (Tregs). Interaction with integrins (ITGAV:ITGB6 or ITGAV:ITGB8) results in distortion of the Latency-associated peptide chain and subsequent release of the active TGF-beta-1. Functionally, multifunctional protein that regulates the growth and differentiation of various cell types and is involved in various processes, such as normal development, immune function, microglia function and responses to neurodegeneration. Activation into mature form follows different steps: following cleavage of the proprotein in the Golgi apparatus, Latency-associated peptide (LAP) and Transforming growth factor beta-1 (TGF-beta-1) chains remain non-covalently linked rendering TGF-beta-1 inactive during storage in extracellular matrix. At the same time, LAP chain interacts with 'milieu molecules', such as LTBP1, LRRC32/GARP and LRRC33/NRROS that control activation of TGF-beta-1 and maintain it in a latent state during storage in extracellular milieus. TGF-beta-1 is released from LAP by integrins (ITGAV:ITGB6 or ITGAV:ITGB8): integrin-binding to LAP stabilizes an alternative conformation of the LAP bowtie tail and results in distortion of the LAP chain and subsequent release of the active TGF-beta-1. Once activated following release of LAP, TGF-beta-1 acts by binding to TGF-beta receptors (TGFBR1 and TGFBR2), which transduce signal. While expressed by many cells types, TGF-beta-1 only has a very localized range of action within cell environment thanks to fine regulation of its activation by Latency-associated peptide chain (LAP) and 'milieu molecules'. Plays an important role in bone remodeling: acts as a potent stimulator of osteoblastic bone formation, causing chemotaxis, proliferation and differentiation in committed osteoblasts. Can promote either T-helper 17 cells (Th17) or regulatory T-cells (Treg) lineage differentiation in a concentration-dependent manner. At high concentrations, leads to FOXP3-mediated suppression of RORC and down-regulation of IL-17 expression, favoring Treg cell development. At low concentrations in concert with IL-6 and IL-21, leads to expression of the IL-17 and IL-23 receptors, favoring differentiation to Th17 cells. Stimulates sustained production of collagen through the activation of CREB3L1 by regulated intramembrane proteolysis (RIP). Mediates SMAD2/3 activation by inducing its phosphorylation and subsequent translocation to the nucleus. Positively regulates odontoblastic differentiation in dental papilla cells, via promotion of IPO7-mediated translocation of phosphorylated SMAD2 to the nucleus and subsequent transcription of target genes. Can induce epithelial-to-mesenchymal transition (EMT) and cell migration in various cell types. In Homo sapiens (Human), this protein is Transforming growth factor beta-1 proprotein.